Here is a 510-residue protein sequence, read N- to C-terminus: GMP synthase [glutamine-hydrolyzing] (510 aa).

The region spanning 5–195 (LVLVVDFGGQ…LFNVCNLKGD (191 aa)) is the Glutamine amidotransferase type-1 domain. The Nucleophile role is filled by Cys82. Residues His169 and Glu171 contribute to the active site. Positions 196–385 (WSMSSFAEQQ…LGIPHKLVWR (190 aa)) constitute a GMPS ATP-PPase domain. Residue 223–229 (SGGVDSS) coordinates ATP.

Homodimer.

The enzyme catalyses XMP + L-glutamine + ATP + H2O = GMP + L-glutamate + AMP + diphosphate + 2 H(+). The protein operates within purine metabolism; GMP biosynthesis; GMP from XMP (L-Gln route): step 1/1. Its function is as follows. Catalyzes the synthesis of GMP from XMP. This is GMP synthase [glutamine-hydrolyzing] from Clostridium botulinum (strain Okra / Type B1).